The chain runs to 98 residues: Large ribosomal subunit protein uL23 (98 aa).

This sequence belongs to the universal ribosomal protein uL23 family. As to quaternary structure, part of the 50S ribosomal subunit. Contacts protein L29, and trigger factor when it is bound to the ribosome.

Its function is as follows. One of the early assembly proteins it binds 23S rRNA. One of the proteins that surrounds the polypeptide exit tunnel on the outside of the ribosome. Forms the main docking site for trigger factor binding to the ribosome. The sequence is that of Large ribosomal subunit protein uL23 from Clostridium beijerinckii (strain ATCC 51743 / NCIMB 8052) (Clostridium acetobutylicum).